The following is a 557-amino-acid chain: Probable phenylalanine--tRNA ligase beta subunit (557 aa).

The 77-residue stretch at 276-352 folds into the B5 domain; the sequence is MHNRSYVMGL…IAHGFNNFRR (77 aa). Mg(2+)-binding residues include D330, D336, E339, and D340.

The protein belongs to the phenylalanyl-tRNA synthetase beta subunit family. Type 2 subfamily. As to quaternary structure, tetramer of two alpha and two beta subunits. Requires Mg(2+) as cofactor.

It localises to the cytoplasm. The enzyme catalyses tRNA(Phe) + L-phenylalanine + ATP = L-phenylalanyl-tRNA(Phe) + AMP + diphosphate + H(+). This Encephalitozoon cuniculi (strain GB-M1) (Microsporidian parasite) protein is Probable phenylalanine--tRNA ligase beta subunit.